The chain runs to 409 residues: Killer cell lectin-like receptor subfamily G member 2 (409 aa).

The interval 1–120 (MEESWEAAPG…GAEPAPSAWA (120 aa)) is disordered. Residues 41 to 53 (PEGPESSPSPAGA) show a composition bias toward low complexity. A compositionally biased stretch (pro residues) spans 72–81 (SPRPGSPRVP). The segment covering 104 to 120 (PRNGEAPGAEPAPSAWA) has biased composition (low complexity). Serine 158 carries the phosphoserine modification. Residues 193 to 216 (TESGCDAEGRASPAEGSAGSPGSP) form a disordered region. Residues 202 to 216 (RASPAEGSAGSPGSP) are compositionally biased toward low complexity. A helical membrane pass occupies residues 263–283 (WALAFMAVLLAVSGVVIVVLA). Residues 300–405 (SEEHCYYFSA…CSTPRPWVCA (106 aa)) form the C-type lectin domain. 2 cysteine pairs are disulfide-bonded: cysteine 321/cysteine 404 and cysteine 383/cysteine 396.

The protein resides in the membrane. This Homo sapiens (Human) protein is Killer cell lectin-like receptor subfamily G member 2 (KLRG2).